Here is a 607-residue protein sequence, read N- to C-terminus: Potassium transporter KimA (607 aa).

Topologically, residues 1-30 (MYHSIKRFLIGKPLKSQAAGEQKLTKLKAL) are cytoplasmic. The chain crosses the membrane as a helical span at residues 31–49 (AMLSSDALSSVAYGTEQIL). 2 residues coordinate K(+): aspartate 36 and tyrosine 43. The Extracellular portion of the chain corresponds to 50 to 62 (IILATISAAAFWY). A helical transmembrane segment spans residues 63-84 (SIPIAVGVLILLLALILSYRQI). Topologically, residues 85 to 105 (IYAYPQGGGAYIVSKENLGEK) are cytoplasmic. The chain crosses the membrane as a helical span at residues 106 to 134 (PGLIAGGSLLVDYILTVAVSISAGTDAIT). Residues aspartate 117 and serine 125 each coordinate K(+). Residues 135–142 (SAFPALHD) are Extracellular-facing. The helical transmembrane segment at 143–162 (YHVPIAIFLVLVIMILNLRG) threads the bilayer. Topologically, residues 163 to 166 (LSES) are cytoplasmic. Residues 167 to 190 (ASILAYPVYLFVVALLVLIAVGLF) traverse the membrane as a helical segment. Over 191–214 (KLMTGQIDQPAHHTSLGTPVAGIT) the chain is Extracellular. Residues 215-238 (LFLLLKAFSSGCSALTGVEAISNA) traverse the membrane as a helical segment. Residues 239–249 (IPAFKNPPARN) lie on the Cytoplasmic side of the membrane. The helical transmembrane segment at 250–271 (AARTLAMMGILLAILFSGITVL) threads the bilayer. Topologically, residues 272 to 298 (AYGYGTAPKPDETVVSQIASETFGRNV) are extracellular. A helical transmembrane segment spans residues 299–323 (FYYVIQGVTSLILVLAANTGFSAFP). Topologically, residues 324–347 (QLAFNLARDQYMPRMFTVRGDRLG) are cytoplasmic. The helical transmembrane segment at 348–366 (FSNGIIFLGFASIVLIILF) threads the bilayer. The Extracellular portion of the chain corresponds to 367–372 (GGQTEH). A helical membrane pass occupies residues 373-393 (LIPLYAVGVFIPFTLSQTGMC). Topologically, residues 394-405 (MKWIKQKPKGWI) are cytoplasmic. Residues 406-428 (GKMLINSCGALISFMVLSILFVT) traverse the membrane as a helical segment. Topologically, residues 429–431 (KFN) are extracellular. The helical transmembrane segment at 432–447 (VVWPVLIFMPIVVLLF) threads the bilayer. Topologically, residues 448-607 (FAIKNHYTAV…VATLPYHFKK (160 aa)) are cytoplasmic.

It belongs to the amino acid-polyamine-organocation (APC) superfamily. As to quaternary structure, homodimer.

It localises to the cell membrane. The enzyme catalyses K(+)(in) + H(+)(in) = K(+)(out) + H(+)(out). Potassium uptake increases at lower external pH and is abolished by the proton ionophore carbonyl cyanide m-chlorophenylhydrazone (CCCP). Binds cyclic di-AMP (c-di-AMP), which inhibits the potassium transport activity. Functionally, high-affinity potassium transporter. Functions as a K(+)/H(+) symporter. The sequence is that of Potassium transporter KimA from Bacillus subtilis (strain 168).